Reading from the N-terminus, the 92-residue chain is MTRSVWKGPFVDGYLLKKAEAAQSSGRKDVIKTWSRRSTIMPQFVGLTFGVHNGHKHVPVLISEDMVGMKLGEFAPTRFFPGHAADKKAKRK.

The protein belongs to the universal ribosomal protein uS19 family.

Its function is as follows. Protein S19 forms a complex with S13 that binds strongly to the 16S ribosomal RNA. In Phenylobacterium zucineum (strain HLK1), this protein is Small ribosomal subunit protein uS19.